We begin with the raw amino-acid sequence, 435 residues long: Oocyte zinc finger protein XlCOF22 (435 aa).

The segment at Asn-71 to Thr-92 is disordered. A compositionally biased stretch (basic and acidic residues) spans Arg-80–His-91. 12 consecutive C2H2-type zinc fingers follow at residues His-97–His-120, Phe-126–His-148, Phe-154–His-176, Phe-182–His-204, Phe-210–His-232, Phe-238–His-260, Phe-266–His-288, Phe-294–His-316, Tyr-322–His-345, Phe-351–His-373, Phe-379–His-402, and Val-408–His-430.

This sequence belongs to the krueppel C2H2-type zinc-finger protein family.

It localises to the nucleus. Functionally, may be involved in transcriptional regulation. This chain is Oocyte zinc finger protein XlCOF22, found in Xenopus laevis (African clawed frog).